Consider the following 534-residue polypeptide: MANFSFVSGAKFRPFSYQEMLQPLQAYTQEYNTIQEGMGELGTKADVFERMANEQTDPQAYAMYKQYSNDLAAQAESLAKQGLTPASRQGLIDMKRRYSSEIVPIEQAYKRRQELVDEQRKLQAQDSTLLFDRPASTLSLDELISNPALSPQSYSGALLSKQVGTAAQNLAKEVRENPRKWRTILGNQYYETIMQKGFRPEEIMQAVQNNPEASPILQGIVEDAVGSSGIRNWNDENILNRAYDYARQGLWNAVGETQYQTLSNKAYDYAMQERLAAAKKGKTEGTPSAVFRSVPKTKVDGDKKTTELNDELQFIQQLRANPSMINEEVERVNPGYPTQYGVNVGGGIYKVKPHAERLQQIIKKYDMKDGNMDQLEQKLQADIRSSAVRDFIYKPNITQSDLISQVIKENARTLGAATESTGLYELDDNRKGDPIKLKNISDYFTGDNDISYDPEVGLIINATKDGKTKSAVIDPELIDDADRSVAGYMNNINVLLENGYDVEAQRYINTMMNYIYGKFNTLAKRQSNTDSKLE.

As to quaternary structure, homododecamer. Localizes inside the capsid.

It localises to the virion. In terms of biological role, protein that is stored in high quantity in the viral capsid and may play a role during ejection. The chain is Cargo protein 2 from Bacteroides intestinalis (Bacteroides phage PhiCrAss001).